A 180-amino-acid polypeptide reads, in one-letter code: Small ribosomal subunit protein uS5 (180 aa).

The interval 1-26 (MAEEKDKKQSSRRRNNRRTEKESEWQ) is disordered. The segment covering 17 to 26 (RRTEKESEWQ) has biased composition (basic and acidic residues). Positions 25 to 88 (WQERVVQIRR…ADGKKHLVNV (64 aa)) constitute an S5 DRBM domain.

The protein belongs to the universal ribosomal protein uS5 family. In terms of assembly, part of the 30S ribosomal subunit. Contacts proteins S4 and S8.

Its function is as follows. With S4 and S12 plays an important role in translational accuracy. In terms of biological role, located at the back of the 30S subunit body where it stabilizes the conformation of the head with respect to the body. The chain is Small ribosomal subunit protein uS5 from Synechococcus elongatus (strain ATCC 33912 / PCC 7942 / FACHB-805) (Anacystis nidulans R2).